We begin with the raw amino-acid sequence, 251 residues long: uncharacterized protein (251 aa).

One can recognise an HTH deoR-type domain in the interval 3-58 (TPERHQLIIDQIEKHDVVKIQELINLTNASESTIRRDLSTLEERGFLKRVHGGAAK). A DNA-binding region (H-T-H motif) is located at residues 20-39 (VKIQELINLTNASESTIRRD).

This is an uncharacterized protein from Bacillus subtilis (strain 168).